The following is a 422-amino-acid chain: Mitochondrial inner membrane magnesium transporter mrs2 (422 aa).

Residues 1–49 (MVLIVGFNLRTSIASFSPICRSLFLFPKYRSRIIRPVVLLEKPFDKHFY) constitute a mitochondrion transit peptide. Residues 331–351 (LMLLGLKLSAMTLGLGFGAVV) traverse the membrane as a helical segment. Positions 355-358 (YGMN) match the YGMN motif. A helical transmembrane segment spans residues 370–390 (FYITTGSIFAFAAFLSSLGIL).

The protein belongs to the CorA metal ion transporter (MIT) (TC 1.A.35) family. Homopentamer. Forms homooligomers. Interacts with MFM1.

The protein localises to the mitochondrion inner membrane. In terms of biological role, high-conductance magnesium-selective channel that mediates the influx of magnesium into the mitochondrial matrix. Essential for the splicing of mRNA group II introns in mitochondria by affecting mitochondrial magnesium concentrations, which are critical for group II intron splicing. It also suppresses a variety of mitochondrial intron mutations and its absence may disturb the assembly of mitochondrial membrane complexes. The protein is Mitochondrial inner membrane magnesium transporter mrs2 (mrs2) of Schizosaccharomyces pombe (strain 972 / ATCC 24843) (Fission yeast).